The following is a 148-amino-acid chain: Lysozyme C (148 aa).

The signal sequence occupies residues Met-1–Gly-18. The C-type lysozyme domain occupies Lys-19–Val-148. 4 disulfides stabilise this stretch: Cys-24/Cys-146, Cys-48/Cys-134, Cys-83/Cys-99, and Cys-95/Cys-113. Residues Glu-53 and Asp-71 contribute to the active site.

This sequence belongs to the glycosyl hydrolase 22 family. As to quaternary structure, monomer.

The protein resides in the secreted. The enzyme catalyses Hydrolysis of (1-&gt;4)-beta-linkages between N-acetylmuramic acid and N-acetyl-D-glucosamine residues in a peptidoglycan and between N-acetyl-D-glucosamine residues in chitodextrins.. Functionally, lysozymes have primarily a bacteriolytic function; those in tissues and body fluids are associated with the monocyte-macrophage system and enhance the activity of immunoagents. Also plays a role in digestion in this species. This chain is Lysozyme C (LYZ), found in Trachypithecus francoisi (Francois' leaf monkey).